A 186-amino-acid polypeptide reads, in one-letter code: dCTP deaminase (186 aa).

107–112 provides a ligand contact to dCTP; that stretch reads KSTYAR. Residue Glu133 is the Proton donor/acceptor of the active site. DCTP-binding residues include Gln152, Tyr166, Lys175, and Gln176.

The protein belongs to the dCTP deaminase family. As to quaternary structure, homotrimer.

The catalysed reaction is dCTP + H2O + H(+) = dUTP + NH4(+). It participates in pyrimidine metabolism; dUMP biosynthesis; dUMP from dCTP (dUTP route): step 1/2. Its function is as follows. Catalyzes the deamination of dCTP to dUTP. This is dCTP deaminase from Wolinella succinogenes (strain ATCC 29543 / DSM 1740 / CCUG 13145 / JCM 31913 / LMG 7466 / NCTC 11488 / FDC 602W) (Vibrio succinogenes).